Here is a 252-residue protein sequence, read N- to C-terminus: ATP synthase subunit a (252 aa).

Helical transmembrane passes span 6 to 26 (LEQF…YFSF), 31 to 51 (LFML…TLNG), 88 to 108 (FFPL…IGMI), 117 to 137 (HFII…IVGF), 144 to 164 (FFSI…LVLL), 190 to 212 (LVKI…YLGQ), and 225 to 245 (LELG…CIYL).

This sequence belongs to the ATPase A chain family. As to quaternary structure, F-type ATPases have 2 components, CF(1) - the catalytic core - and CF(0) - the membrane proton channel. CF(1) has five subunits: alpha(3), beta(3), gamma(1), delta(1), epsilon(1). CF(0) has three main subunits: a, b and c.

The protein localises to the mitochondrion inner membrane. In terms of biological role, mitochondrial membrane ATP synthase (F(1)F(0) ATP synthase or Complex V) produces ATP from ADP in the presence of a proton gradient across the membrane which is generated by electron transport complexes of the respiratory chain. F-type ATPases consist of two structural domains, F(1) - containing the extramembraneous catalytic core and F(0) - containing the membrane proton channel, linked together by a central stalk and a peripheral stalk. During catalysis, ATP synthesis in the catalytic domain of F(1) is coupled via a rotary mechanism of the central stalk subunits to proton translocation. Key component of the proton channel; it may play a direct role in the translocation of protons across the membrane. This Marchantia polymorpha (Common liverwort) protein is ATP synthase subunit a (ATP6).